The following is a 410-amino-acid chain: MILIIYRALFFVTIPGVNSAALAKLSNNSSLTMLSMFSGGGFENFSIMSLGVTAYITAQIIVQLLQADVIPTFTQWSKEGQTGRKKLDQVTRSLTLVLGLVQATGITLGINTLTNGKFMIENNPFTIIVIAVSMTAGSFIAMWLGDLITENGLGNGISVIITAGILVRFPSMINDVIKGVTFGTKVNWIRFSELMIGAAILILLIVWFTRSELRIPIQYARRAQLTGKDSYLPLKIIVPGVIPVIFASTIMTIPQTILMFFNAGQNSSWYRVVQTFFTLSTTSGVIIYGLMIIFFEYLYSIVQIEPDKFADNLEKQEAYIPNVYPGDPTKEFIQNMLNYLSLPGSLFLMLVSIIPLLVANSVSSSLQIGLSGSSILIITGVLIEIGRQIKGLKLKREYGTFLSTDFSLDD.

The next 10 helical transmembrane spans lie at Ile-2 to Leu-22, Phe-45 to Leu-65, Leu-94 to Thr-114, Phe-125 to Gly-145, Leu-147 to Val-167, Trp-188 to Phe-208, Val-241 to Phe-261, Gly-284 to Ile-304, Tyr-339 to Ala-359, and Leu-366 to Gly-386.

Belongs to the SecY/SEC61-alpha family. As to quaternary structure, component of the Sec protein translocase complex. Heterotrimer consisting of SecY, SecE and SecG subunits. The heterotrimers can form oligomers, although 1 heterotrimer is thought to be able to translocate proteins. Interacts with the ribosome. Interacts with SecDF, and other proteins may be involved. Interacts with SecA.

It localises to the cell membrane. Its function is as follows. The central subunit of the protein translocation channel SecYEG. Consists of two halves formed by TMs 1-5 and 6-10. These two domains form a lateral gate at the front which open onto the bilayer between TMs 2 and 7, and are clamped together by SecE at the back. The channel is closed by both a pore ring composed of hydrophobic SecY resides and a short helix (helix 2A) on the extracellular side of the membrane which forms a plug. The plug probably moves laterally to allow the channel to open. The ring and the pore may move independently. The protein is Protein translocase subunit SecY 2 of Lactobacillus kefiranofaciens subsp. kefiranofaciens.